The primary structure comprises 270 residues: Gap junction beta-3 protein (270 aa).

Over 1–20 the chain is Cytoplasmic; it reads MDWKTLQALLSGVNKYSTAF. A helical membrane pass occupies residues 21 to 40; it reads GRIWLSVVFVFRVLVYVVAA. Topologically, residues 41-75 are extracellular; sequence ERVWGDEQKDFDCNTKQPGCTNVCYDNYFPISNIR. Residues 76-98 form a helical membrane-spanning segment; it reads LWALQLIFVTCPSLLVILHVAYR. The Cytoplasmic segment spans residues 99-126; the sequence is EERERRHRQKHGDQCAKLYDNAGKKHGG. The chain crosses the membrane as a helical span at residues 127-149; the sequence is LWWTYLFSLIFKLIIEFLFLYLL. The Extracellular segment spans residues 150–187; it reads HTLWHGFNMPRLVQCANVAPCPNIVDCYIARPTEKKIF. Residues 188–210 form a helical membrane-spanning segment; the sequence is TYFMVGASAVCIVLTICELCYLI. Residues 211-270 lie on the Cytoplasmic side of the membrane; that stretch reads CHRVLRGLHKDKPRGGCSPSSSASRASTCRCHHKLVEAGEVDPDPGNNKLQASAPNLTPI. The tract at residues 250–270 is disordered; that stretch reads EVDPDPGNNKLQASAPNLTPI. A compositionally biased stretch (polar residues) spans 258–270; the sequence is NKLQASAPNLTPI.

Belongs to the connexin family. Beta-type (group I) subfamily. As to quaternary structure, a connexon is composed of a hexamer of connexins. Interacts with CNST.

It is found in the cell membrane. It localises to the cell junction. Its subcellular location is the gap junction. In terms of biological role, one gap junction consists of a cluster of closely packed pairs of transmembrane channels, the connexons, through which materials of low MW diffuse from one cell to a neighboring cell. The protein is Gap junction beta-3 protein (GJB3) of Homo sapiens (Human).